A 221-amino-acid polypeptide reads, in one-letter code: Large ribosomal subunit protein uL4 (221 aa).

Positions 45–100 (ARQGTHKTKNRGEVSGAGRKPFKQKGTGRARQGSIRAPQMTGGGIVHGPTPRDYSQ) are disordered.

Belongs to the universal ribosomal protein uL4 family. As to quaternary structure, part of the 50S ribosomal subunit.

Functionally, one of the primary rRNA binding proteins, this protein initially binds near the 5'-end of the 23S rRNA. It is important during the early stages of 50S assembly. It makes multiple contacts with different domains of the 23S rRNA in the assembled 50S subunit and ribosome. Its function is as follows. Forms part of the polypeptide exit tunnel. The chain is Large ribosomal subunit protein uL4 from Leifsonia xyli subsp. xyli (strain CTCB07).